The primary structure comprises 93 residues: Co-chaperonin GroES (93 aa).

Belongs to the GroES chaperonin family. As to quaternary structure, heptamer of 7 subunits arranged in a ring. Interacts with the chaperonin GroEL.

It localises to the cytoplasm. In terms of biological role, together with the chaperonin GroEL, plays an essential role in assisting protein folding. The GroEL-GroES system forms a nano-cage that allows encapsulation of the non-native substrate proteins and provides a physical environment optimized to promote and accelerate protein folding. GroES binds to the apical surface of the GroEL ring, thereby capping the opening of the GroEL channel. This is Co-chaperonin GroES from Streptococcus gordonii (strain Challis / ATCC 35105 / BCRC 15272 / CH1 / DL1 / V288).